The chain runs to 535 residues: CTP synthase (535 aa).

Positions 1–267 (MTKYIFVTGG…DQIVCDHLKL (267 aa)) are amidoligase domain. S13 contacts CTP. UTP is bound at residue S13. 14-19 (SLGKGI) is a binding site for ATP. Y54 serves as a coordination point for L-glutamine. D71 contributes to the ATP binding site. Mg(2+)-binding residues include D71 and E141. CTP is bound by residues 148-150 (DIE), 188-193 (KTKPTQ), and K224. UTP-binding positions include 188–193 (KTKPTQ) and K224. 240-242 (RDA) lines the ATP pocket. The Glutamine amidotransferase type-1 domain maps to 292–534 (KIALVGKYVE…VRASITNKES (243 aa)). G354 lines the L-glutamine pocket. C381 (nucleophile; for glutamine hydrolysis) is an active-site residue. L-glutamine is bound by residues 382 to 385 (LGMQ), E405, and R462. Catalysis depends on residues H507 and E509.

It belongs to the CTP synthase family. Homotetramer.

The catalysed reaction is UTP + L-glutamine + ATP + H2O = CTP + L-glutamate + ADP + phosphate + 2 H(+). It carries out the reaction L-glutamine + H2O = L-glutamate + NH4(+). It catalyses the reaction UTP + NH4(+) + ATP = CTP + ADP + phosphate + 2 H(+). It functions in the pathway pyrimidine metabolism; CTP biosynthesis via de novo pathway; CTP from UDP: step 2/2. With respect to regulation, allosterically activated by GTP, when glutamine is the substrate; GTP has no effect on the reaction when ammonia is the substrate. The allosteric effector GTP functions by stabilizing the protein conformation that binds the tetrahedral intermediate(s) formed during glutamine hydrolysis. Inhibited by the product CTP, via allosteric rather than competitive inhibition. Functionally, catalyzes the ATP-dependent amination of UTP to CTP with either L-glutamine or ammonia as the source of nitrogen. Regulates intracellular CTP levels through interactions with the four ribonucleotide triphosphates. The polypeptide is CTP synthase (Bacillus cereus (strain G9842)).